The chain runs to 207 residues: Dephospho-CoA kinase (207 aa).

The region spanning 5 to 203 is the DPCK domain; that stretch reads AVGLTGGVAC…ARYRALASVF (199 aa). Residue 13–18 participates in ATP binding; sequence ACGKSL.

It belongs to the CoaE family.

Its subcellular location is the cytoplasm. It carries out the reaction 3'-dephospho-CoA + ATP = ADP + CoA + H(+). The protein operates within cofactor biosynthesis; coenzyme A biosynthesis; CoA from (R)-pantothenate: step 5/5. Functionally, catalyzes the phosphorylation of the 3'-hydroxyl group of dephosphocoenzyme A to form coenzyme A. This Xylella fastidiosa (strain Temecula1 / ATCC 700964) protein is Dephospho-CoA kinase.